A 44-amino-acid chain; its full sequence is DNA-directed RNA polymerase subunit Rpo12 (44 aa).

Zn(2+) is bound by residues C8, C22, and C25.

The protein belongs to the archaeal Rpo12/eukaryotic RPC10 RNA polymerase subunit family. As to quaternary structure, part of the RNA polymerase complex. Zn(2+) serves as cofactor.

The protein resides in the cytoplasm. The catalysed reaction is RNA(n) + a ribonucleoside 5'-triphosphate = RNA(n+1) + diphosphate. Its function is as follows. DNA-dependent RNA polymerase (RNAP) catalyzes the transcription of DNA into RNA using the four ribonucleoside triphosphates as substrates. The sequence is that of DNA-directed RNA polymerase subunit Rpo12 from Natronomonas pharaonis (strain ATCC 35678 / DSM 2160 / CIP 103997 / JCM 8858 / NBRC 14720 / NCIMB 2260 / Gabara) (Halobacterium pharaonis).